A 789-amino-acid polypeptide reads, in one-letter code: Phenylalanine--tRNA ligase beta subunit (789 aa).

A tRNA-binding domain is found at 38-151 (KKHLQSFVVV…NTYNVGESFF (114 aa)). The 77-residue stretch at 398-474 (HNDILLNFSP…RLYGYDKILE (77 aa)) folds into the B5 domain. Residues Asp-452, Asp-458, Glu-461, and Glu-462 each contribute to the Mg(2+) site. In terms of domain architecture, FDX-ACB spans 694–787 (LRYQSVKRDF…ISKGFNGILR (94 aa)).

It belongs to the phenylalanyl-tRNA synthetase beta subunit family. Type 1 subfamily. Tetramer of two alpha and two beta subunits. It depends on Mg(2+) as a cofactor.

It is found in the cytoplasm. It catalyses the reaction tRNA(Phe) + L-phenylalanine + ATP = L-phenylalanyl-tRNA(Phe) + AMP + diphosphate + H(+). The polypeptide is Phenylalanine--tRNA ligase beta subunit (Ehrlichia ruminantium (strain Welgevonden)).